The primary structure comprises 3172 residues: Erythronolide synthase EryA3 (3172 aa).

One can recognise a Ketosynthase family 3 (KS3) 1 domain in the interval 38–452 (GEPIAIVGMA…GTNAHVIVEE (415 aa)). Module regions lie at residues 41 to 1464 (IAIV…DHYL) and 1492 to 2891 (IAIV…DHIG). Catalysis depends on Cys-199, which acts as the Acyl-thioester intermediate; for beta-ketoacyl synthase 1 activity. Residues His-334 and His-374 each act as for beta-ketoacyl synthase 1 activity in the active site. The interval 557 to 874 (VFPGQGAQWQ…LGEAYAQGVE (318 aa)) is acyltransferase 1. Residue Ser-643 is the Acyl-ester intermediate; for acyltransferase 1 activity of the active site. Residues 1117–1294 (GTVLVTGGTG…VTSIAWGLWA (178 aa)) form a beta-ketoacyl reductase 1 region. Residues 1125 to 1128 (TGGI), 1148 to 1151 (GRRG), 1177 to 1178 (DV), Lys-1229, and 1249 to 1250 (FS) each bind NADP(+). Catalysis depends on Tyr-1264, which acts as the Acyl-ester intermediate; for beta-ketoacyl reductase 1 activity. The 76-residue stretch at 1392 to 1467 (EHLAHLIRAE…RLADHYLERL (76 aa)) folds into the Carrier 1 domain. Ser-1427 bears the O-(pantetheine 4'-phosphoryl)serine mark. The 428-residue stretch at 1489-1916 (DDPIAIVGMA…GTNAHVIIAE (428 aa)) folds into the Ketosynthase family 3 (KS3) 2 domain. Cys-1661 (acyl-thioester intermediate; for beta-ketoacyl synthase 2 activity) is an active-site residue. Catalysis depends on for beta-ketoacyl synthase 2 activity residues His-1797 and His-1837. An acyltransferase 2 region spans residues 2022 to 2331 (VFVFPGQGAQ…LARAHVHGVA (310 aa)). Ser-2112 acts as the Acyl-ester intermediate; for acyltransferase 2 activity in catalysis. The tract at residues 2557–2731 (GTALVTGGTG…ATSVAWGAWA (175 aa)) is beta-ketoacyl reductase 2. Residues 2565 to 2568 (TGAL), 2588 to 2591 (SRRG), 2617 to 2618 (DV), Lys-2666, and 2686 to 2687 (FS) each bind NADP(+). The active-site Acyl-ester intermediate; for beta-ketoacyl reductase 2 activity is Tyr-2701. Residues 2819–2894 (QELLEFTHSH…RLADHIGQQL (76 aa)) form the Carrier 2 domain. O-(pantetheine 4'-phosphoryl)serine is present on Ser-2854. The segment at 2960–3166 (ICCAGTAAIS…DAIARHIDAW (207 aa)) is thioesterase. Position 2965 (Thr-2965) interacts with substrate. Ser-3031 serves as the catalytic Nucleophile; for thioesterase activity. Residues Ala-3032 and Asp-3058 each coordinate substrate. Residue His-3148 is the Proton acceptor; for thioesterase activity of the active site.

As to quaternary structure, homodimer. Erythronolide synthase is composed of EryAI, EryAII and EryAIII multimodular (2 modules) polypeptides each coding for a functional synthase subunit which participates in 2 of the six FAS-like elongation steps required for formation of the polyketide. Module 1, 2, 3, 4, 5, and 6 participating in biosynthesis steps 1, 2, 3, 4, 5, and 6, respectively. Pantetheine 4'-phosphate serves as cofactor.

It carries out the reaction 6 (S)-methylmalonyl-CoA + propanoyl-CoA + 6 NADPH + 12 H(+) = 6-deoxyerythronolide B + 6 CO2 + 6 NADP(+) + 7 CoA + H2O. The protein operates within antibiotic biosynthesis; erythromycin biosynthesis. With respect to regulation, inhibited by diphenyl phosphonates derivatives such as diphenyl allylphosphonate. Functionally, involved in the biosynthesis of antibiotic erythromycin via the biosynthesis of its aglycone precursor, 6-deoxyerythronolide B (6-dEB). The chain is Erythronolide synthase EryA3 from Saccharopolyspora erythraea (Streptomyces erythraeus).